The following is a 62-amino-acid chain: Cuticle protein 6.4 (62 aa).

In terms of biological role, component of the cuticle of migratory locust which contains more than 100 different structural proteins. The protein is Cuticle protein 6.4 of Locusta migratoria (Migratory locust).